A 433-amino-acid polypeptide reads, in one-letter code: Tol-Pal system protein TolB (433 aa).

The first 21 residues, 1–21 (MRNLLRGMLVVICCMAGIAAA), serve as a signal peptide directing secretion.

It belongs to the TolB family. The Tol-Pal system is composed of five core proteins: the inner membrane proteins TolA, TolQ and TolR, the periplasmic protein TolB and the outer membrane protein Pal. They form a network linking the inner and outer membranes and the peptidoglycan layer.

It is found in the periplasm. In terms of biological role, part of the Tol-Pal system, which plays a role in outer membrane invagination during cell division and is important for maintaining outer membrane integrity. The protein is Tol-Pal system protein TolB of Pseudomonas fluorescens (strain SBW25).